A 237-amino-acid polypeptide reads, in one-letter code: Proteasome subunit alpha (237 aa).

Belongs to the peptidase T1A family. In terms of assembly, the 20S proteasome core is composed of 14 alpha and 14 beta subunits that assemble into four stacked heptameric rings, resulting in a barrel-shaped structure. The two inner rings, each composed of seven catalytic beta subunits, are sandwiched by two outer rings, each composed of seven alpha subunits. The catalytic chamber with the active sites is on the inside of the barrel. Has a gated structure, the ends of the cylinder being occluded by the N-termini of the alpha-subunits. Is capped by the proteasome-associated ATPase, ARC.

Its subcellular location is the cytoplasm. Its pathway is protein degradation; proteasomal Pup-dependent pathway. The formation of the proteasomal ATPase ARC-20S proteasome complex, likely via the docking of the C-termini of ARC into the intersubunit pockets in the alpha-rings, may trigger opening of the gate for substrate entry. Interconversion between the open-gate and close-gate conformations leads to a dynamic regulation of the 20S proteasome proteolysis activity. Functionally, component of the proteasome core, a large protease complex with broad specificity involved in protein degradation. In Kineococcus radiotolerans (strain ATCC BAA-149 / DSM 14245 / SRS30216), this protein is Proteasome subunit alpha.